The chain runs to 472 residues: Glutamate--tRNA ligase 2 (472 aa).

The 'HIGH' region signature appears at 10–20 (PSPTGYLHIGG). Residues C99, C101, C126, and D128 each contribute to the Zn(2+) site. The span at 112–130 (EQQARKEKPRYDGRCRDLD) shows a compositional bias: basic and acidic residues. A disordered region spans residues 112 to 137 (EQQARKEKPRYDGRCRDLDGPPSEEV). Positions 240–244 (RLSKR) match the 'KMSKS' region motif. K243 contacts ATP.

The protein belongs to the class-I aminoacyl-tRNA synthetase family. Glutamate--tRNA ligase type 1 subfamily. As to quaternary structure, monomer. The cofactor is Zn(2+).

It localises to the cytoplasm. The enzyme catalyses tRNA(Glu) + L-glutamate + ATP = L-glutamyl-tRNA(Glu) + AMP + diphosphate. Functionally, catalyzes the attachment of glutamate to tRNA(Glu) in a two-step reaction: glutamate is first activated by ATP to form Glu-AMP and then transferred to the acceptor end of tRNA(Glu). In Halorhodospira halophila (strain DSM 244 / SL1) (Ectothiorhodospira halophila (strain DSM 244 / SL1)), this protein is Glutamate--tRNA ligase 2.